The following is a 671-amino-acid chain: MESIEQQLTELRTTLRHHEYLYHVMDAPEIPDAEYDRLMRELRELETKHPELITPDSPTQRVGAAPLAAFSQIRHEVPMLSLDNVFDEESFLAFNKRVQDRLKSNEKVTWCCELKLDGLAVSILYENGVLVSAATRGDGTTGEDITSNVRTIRAIPLKLHGENIPARLEVRGEVFLPQAGFEKINEDARRTGGKVFANPRNAAAGSLRQLDPRITAKRPLTFFCYGVGVLEGGELPDTHLGRLMQFKAWGLPVSDRVTLCESAEEVLAFYHEVEKDRPTLGFDIDGVVIKVNSLAQQEQLGFVARAPRWAVAFKFPAQEQMTFVRDVEFQVGRTGAITPVARLEPVHVAGVLVSNATLHNADEIERLGLRIGDKVVIRRAGDVIPQVVNVVLSERPEDTREVVFPTHCPVCGSDVERVEGEAVARCTGGLICGAQRKESLKHFVSRRAMDVDGMGDKIIDQLVEKEYVHTPADLFKLTAGKLTGLERMGLKSAQNVVNALEKAKETTFARFLYALGIREVGEATAAGLAAYFGTLEALEAASIEELQKVPDVGIVVASHVHNFFAEESNRNVISELLAEGVHWPEPIVINAEEIDSPFAGKTVVLTGSLSQMSRDDAKARLVELGAKVAGSVSKKTDLVIAGEAAGSKLAKAQELGIEVIDETEMLRLLGS.

NAD(+) contacts are provided by residues 32-36 (DAEYD), 81-82 (SL), and glutamate 113. Catalysis depends on lysine 115, which acts as the N6-AMP-lysine intermediate. Arginine 136, glutamate 173, lysine 290, and lysine 314 together coordinate NAD(+). Zn(2+) contacts are provided by cysteine 408, cysteine 411, cysteine 426, and cysteine 432. Positions 593-671 (EIDSPFAGKT…ETEMLRLLGS (79 aa)) constitute a BRCT domain.

The protein belongs to the NAD-dependent DNA ligase family. LigA subfamily. It depends on Mg(2+) as a cofactor. Mn(2+) is required as a cofactor.

The catalysed reaction is NAD(+) + (deoxyribonucleotide)n-3'-hydroxyl + 5'-phospho-(deoxyribonucleotide)m = (deoxyribonucleotide)n+m + AMP + beta-nicotinamide D-nucleotide.. Its function is as follows. DNA ligase that catalyzes the formation of phosphodiester linkages between 5'-phosphoryl and 3'-hydroxyl groups in double-stranded DNA using NAD as a coenzyme and as the energy source for the reaction. It is essential for DNA replication and repair of damaged DNA. This chain is DNA ligase, found in Escherichia coli O81 (strain ED1a).